The following is a 512-amino-acid chain: MRFSTEGFTSKVVAAILAFSRLVSAQPIIFDMRDVSSSADKWKDQSIYQIVTDRFARSDGSTTADCLVSDRKYCGGSYKGIIDKLDYIQGMGFTAIWISPVVEQIPDNTAYGYAYHGYWMKNIDELNTNFGTADELKQLASELHSRSMLLMVDVVYNHYAWNGDGSSVDYSSFTPFNQQSYFHDYCLITNYNDQTNVEDCWEGDTEVSLPDLSTEDNEVIGVFQTWVSDFVQNYSIDGLRIDSAKHVDTASLTKFEDASGVYNLGEVYQGDPTYTCPYQNYMKGVTNYPLYYPVYRFFSDTSATSSELTSMISTLQSSCSDVSLLGNFIENHDQVRFPSVTSDTSLIKNDMAFIILGDGIPIIYYGQEQGLNGGSDPANREALWLSGYNTDSEYYELISKLNQIRNQAIKKDSAYSTYKSSVVSSSDHYIATRKGSDANQLISIFNNLGSNGSQDITVSNTGYSSGDKVIDIISCNSVLAGDSGSLSVSISGGMPQVYAPSSVLSGSGICNQ.

An N-terminal signal peptide occupies residues 1 to 25 (MRFSTEGFTSKVVAAILAFSRLVSA). An intrachain disulfide couples cysteine 66 to cysteine 74. Position 119 (tryptophan 119) interacts with substrate. Position 157 (asparagine 157) interacts with Ca(2+). Residue histidine 158 participates in substrate binding. Cysteine 186 and cysteine 200 are disulfide-bonded. Residues glutamate 198 and aspartate 211 each coordinate Ca(2+). A glycan (N-linked (GlcNAc...) asparagine) is linked at asparagine 233. Residue arginine 240 participates in substrate binding. 3 residues coordinate Ca(2+): aspartate 242, histidine 246, and glutamate 266. Catalysis depends on aspartate 242, which acts as the Nucleophile. Position 245-246 (245-246 (KH)) interacts with substrate. Residue glutamate 266 is the Proton donor of the active site. Glycine 270 provides a ligand contact to substrate. Cysteine 276 and cysteine 319 form a disulfide bridge. Substrate-binding residues include aspartate 333 and arginine 380. Cysteine 475 and cysteine 510 form a disulfide bridge.

This sequence belongs to the glycosyl hydrolase 13 family. The cofactor is Ca(2+).

The protein localises to the secreted. It catalyses the reaction Endohydrolysis of (1-&gt;4)-alpha-D-glucosidic linkages in polysaccharides containing three or more (1-&gt;4)-alpha-linked D-glucose units.. With respect to regulation, alpha-amylase expression underlies catabolite repression by glucose. The chain is Alpha-amylase 1 (AMY1) from Schwanniomyces occidentalis (Yeast).